Here is a 121-residue protein sequence, read N- to C-terminus: Large ribosomal subunit protein uL14 (121 aa).

This sequence belongs to the universal ribosomal protein uL14 family. In terms of assembly, part of the 50S ribosomal subunit. Forms a cluster with proteins L3 and L19. In the 70S ribosome, L14 and L19 interact and together make contacts with the 16S rRNA in bridges B5 and B8.

In terms of biological role, binds to 23S rRNA. Forms part of two intersubunit bridges in the 70S ribosome. In Synechococcus sp. (strain CC9311), this protein is Large ribosomal subunit protein uL14.